Here is a 284-residue protein sequence, read N- to C-terminus: Small ribosomal subunit protein uS2 (284 aa).

A compositionally biased stretch (low complexity) spans 250–272 (QELLAGATASPTAAGAAPGTPEA). Residues 250–284 (QELLAGATASPTAAGAAPGTPEADIQTEPTAPQNP) are disordered.

The protein belongs to the universal ribosomal protein uS2 family.

This chain is Small ribosomal subunit protein uS2, found in Mycobacterium sp. (strain KMS).